Consider the following 379-residue polypeptide: Anhydro-N-acetylmuramic acid kinase (379 aa).

12 to 19 provides a ligand contact to ATP; that stretch reads GTSLDGMD.

Belongs to the anhydro-N-acetylmuramic acid kinase family.

It carries out the reaction 1,6-anhydro-N-acetyl-beta-muramate + ATP + H2O = N-acetyl-D-muramate 6-phosphate + ADP + H(+). Its pathway is amino-sugar metabolism; 1,6-anhydro-N-acetylmuramate degradation. It functions in the pathway cell wall biogenesis; peptidoglycan recycling. Functionally, catalyzes the specific phosphorylation of 1,6-anhydro-N-acetylmuramic acid (anhMurNAc) with the simultaneous cleavage of the 1,6-anhydro ring, generating MurNAc-6-P. Is required for the utilization of anhMurNAc either imported from the medium or derived from its own cell wall murein, and thus plays a role in cell wall recycling. This Gloeobacter violaceus (strain ATCC 29082 / PCC 7421) protein is Anhydro-N-acetylmuramic acid kinase.